The primary structure comprises 572 residues: MRTTQYLLSTLKETPADAEVISHQLMLRAGMIRKLASGLYTWLPTGLRVLKKVENIVREEMNNAGAIEISMPVVQPADLWQESGRWEQYGPELLRLVDRSDRPFVLGPTHEEVITDLIRNELSSYKQLPLNLFQIQTKFRDEVRPRFGVMRSREFIMKDAYSFHTSQGSLQETYDAMYRAYSQSFSRMGLDFRAVQADTGSIGGSASHEFQVLAQSGEDDIVFSTGSDYAANIEMAEALPPAGGRADATQERVQFATPEAKTIADLVEQFTLPIEKTVKTLMVKATKESGHTLVALLVRGDHELNEIKAEKIDIVAAPLTFATEEEIRALVNAGPGSLGPVGLNMPIVADRTVAAMSDFSAGANIDGQHFSGINWQRDLPLPRIADIRNVVEGDASPDGKGTLLIKRGIEVGHIFQLGTKYSEAMKASVQGEDGRNQTLTMGCYGIGITRIVAAAIEQNHDERGIIWSPALAPFQVAILPMNMQKSFRVKELAEALYQQLRAKGIDVILDDRKERPGVMFADMELIGVPHTIVIGERNLDNDEIEYKARRGGEKRLIKTDEIVDFLMAELAQ.

Belongs to the class-II aminoacyl-tRNA synthetase family. ProS type 1 subfamily. As to quaternary structure, homodimer.

It is found in the cytoplasm. The enzyme catalyses tRNA(Pro) + L-proline + ATP = L-prolyl-tRNA(Pro) + AMP + diphosphate. Its function is as follows. Catalyzes the attachment of proline to tRNA(Pro) in a two-step reaction: proline is first activated by ATP to form Pro-AMP and then transferred to the acceptor end of tRNA(Pro). As ProRS can inadvertently accommodate and process non-cognate amino acids such as alanine and cysteine, to avoid such errors it has two additional distinct editing activities against alanine. One activity is designated as 'pretransfer' editing and involves the tRNA(Pro)-independent hydrolysis of activated Ala-AMP. The other activity is designated 'posttransfer' editing and involves deacylation of mischarged Ala-tRNA(Pro). The misacylated Cys-tRNA(Pro) is not edited by ProRS. In Erwinia tasmaniensis (strain DSM 17950 / CFBP 7177 / CIP 109463 / NCPPB 4357 / Et1/99), this protein is Proline--tRNA ligase.